The sequence spans 195 residues: Protein GrpE (195 aa).

The protein belongs to the GrpE family. In terms of assembly, homodimer.

Its subcellular location is the cytoplasm. In terms of biological role, participates actively in the response to hyperosmotic and heat shock by preventing the aggregation of stress-denatured proteins, in association with DnaK and GrpE. It is the nucleotide exchange factor for DnaK and may function as a thermosensor. Unfolded proteins bind initially to DnaJ; upon interaction with the DnaJ-bound protein, DnaK hydrolyzes its bound ATP, resulting in the formation of a stable complex. GrpE releases ADP from DnaK; ATP binding to DnaK triggers the release of the substrate protein, thus completing the reaction cycle. Several rounds of ATP-dependent interactions between DnaJ, DnaK and GrpE are required for fully efficient folding. The chain is Protein GrpE from Blochmanniella floridana.